A 216-amino-acid chain; its full sequence is Elongation factor Ts (216 aa).

Positions 81–84 are involved in Mg(2+) ion dislocation from EF-Tu; sequence TDFV.

It belongs to the EF-Ts family.

The protein localises to the cytoplasm. Associates with the EF-Tu.GDP complex and induces the exchange of GDP to GTP. It remains bound to the aminoacyl-tRNA.EF-Tu.GTP complex up to the GTP hydrolysis stage on the ribosome. The chain is Elongation factor Ts from Geobacter metallireducens (strain ATCC 53774 / DSM 7210 / GS-15).